The chain runs to 514 residues: Cytochrome P450 monooxygenase nodJ (514 aa).

A helical membrane pass occupies residues 2–24 (ELIVIIITLAFCILLYGTRWRAA). Asn144, Asn245, and Asn416 each carry an N-linked (GlcNAc...) asparagine glycan. Heme is bound at residue Cys432.

The protein belongs to the cytochrome P450 family. The cofactor is heme.

The protein localises to the membrane. The protein operates within secondary metabolite biosynthesis. Its function is as follows. Cytochrome P450 monooxygenase; part of the gene cluster that mediates the biosynthesis of the indole diterpenes nodulisporic acids (NA). Nodulisporic acid A (NAA) and its chemically modified derivatives are of particular significance because of their highly potent insecticidal activity against blood-feeding arthropods and lack of observable adverse effects on mammals, in particular the tremogenicity associated with the paspaline-derived IDTs is not observed. The geranylgeranyl diphosphate (GGPP) synthase ggs1, localized outside of the cluster, is proposed to catalyze the first step in nodulisporic acid biosynthesis via conversion of farnesyl pyrophosphate and isopentyl pyrophosphate into geranylgeranyl pyrophosphate (GGPP). Condensation of indole-3-glycerol phosphate with GGPP by the prenyl transferase nodC then forms 3-geranylgeranylindole (3-GGI). Epoxidation by the FAD-dependent monooxygenase nodM leads to a single-epoxidized-GGI that is substrate of the terpene cyclase nodB for cyclization to yield emindole SB. The terminal methyl carbon, C28, of emindole SB is then oxidized by the cytochrome P450 monooxygenase nodW to produce nodulisporic acid F (NAF), the pentacyclic core of NAA. NAF is converted to nodulisporic acid E (NAE) via prenylation. This step is probably performed by one of the indole diterpene prenyltransferases nodD1 or nodD2. Several oxidation steps performed by the FAD-linked oxidoreductase nodO and one of the cytochrome P450 monooxygenase nodR, nodX or nodZ further convert NAE to nodulisporic acid D (NAD). NAD is substrate of cytochrome P450 monooxygenase nodJ to produce the precursor of nodulisporic acid C (NAC), converted to NAC by one of the indole diterpene prenyltransferases nodD1 or nodD2. The FAD-dependent monooxygenase nodY2 then oxidizes NAC to nodulisporic acid B (NAB). Finally NAB is converted to NAA by one of the cytochrome P450 monooxygenases nodR, nodX or nodZ. This Hypoxylon pulicicidum protein is Cytochrome P450 monooxygenase nodJ.